We begin with the raw amino-acid sequence, 60 residues long: Large ribosomal subunit protein uL30 (60 aa).

It belongs to the universal ribosomal protein uL30 family. In terms of assembly, part of the 50S ribosomal subunit.

The polypeptide is Large ribosomal subunit protein uL30 (Alcanivorax borkumensis (strain ATCC 700651 / DSM 11573 / NCIMB 13689 / SK2)).